The sequence spans 181 residues: Large ribosomal subunit protein uL5 (181 aa).

This sequence belongs to the universal ribosomal protein uL5 family. In terms of assembly, part of the 50S ribosomal subunit; part of the 5S rRNA/L5/L18/L25 subcomplex. Contacts the 5S rRNA and the P site tRNA. Forms a bridge to the 30S subunit in the 70S ribosome.

In terms of biological role, this is one of the proteins that bind and probably mediate the attachment of the 5S RNA into the large ribosomal subunit, where it forms part of the central protuberance. In the 70S ribosome it contacts protein S13 of the 30S subunit (bridge B1b), connecting the 2 subunits; this bridge is implicated in subunit movement. Contacts the P site tRNA; the 5S rRNA and some of its associated proteins might help stabilize positioning of ribosome-bound tRNAs. The polypeptide is Large ribosomal subunit protein uL5 (Baumannia cicadellinicola subsp. Homalodisca coagulata).